The primary structure comprises 240 residues: Pyridoxine 5'-phosphate synthase (240 aa).

Residue Asn-7 coordinates 3-amino-2-oxopropyl phosphate. 1-deoxy-D-xylulose 5-phosphate is bound at residue 9 to 10; that stretch reads DH. 3-amino-2-oxopropyl phosphate is bound at residue Arg-18. Catalysis depends on His-43, which acts as the Proton acceptor. 1-deoxy-D-xylulose 5-phosphate is bound by residues Arg-45 and His-50. Glu-70 acts as the Proton acceptor in catalysis. Thr-100 is a 1-deoxy-D-xylulose 5-phosphate binding site. The active-site Proton donor is the His-191. 3-amino-2-oxopropyl phosphate-binding positions include Gly-192 and 213 to 214; that span reads GH.

Belongs to the PNP synthase family. As to quaternary structure, homooctamer; tetramer of dimers.

The protein resides in the cytoplasm. It carries out the reaction 3-amino-2-oxopropyl phosphate + 1-deoxy-D-xylulose 5-phosphate = pyridoxine 5'-phosphate + phosphate + 2 H2O + H(+). The protein operates within cofactor biosynthesis; pyridoxine 5'-phosphate biosynthesis; pyridoxine 5'-phosphate from D-erythrose 4-phosphate: step 5/5. In terms of biological role, catalyzes the complicated ring closure reaction between the two acyclic compounds 1-deoxy-D-xylulose-5-phosphate (DXP) and 3-amino-2-oxopropyl phosphate (1-amino-acetone-3-phosphate or AAP) to form pyridoxine 5'-phosphate (PNP) and inorganic phosphate. The chain is Pyridoxine 5'-phosphate synthase from Acaryochloris marina (strain MBIC 11017).